Consider the following 134-residue polypeptide: Small ribosomal subunit protein uS11 (134 aa).

The protein belongs to the universal ribosomal protein uS11 family. Part of the 30S ribosomal subunit. Interacts with proteins S7 and S18. Binds to IF-3.

Its function is as follows. Located on the platform of the 30S subunit, it bridges several disparate RNA helices of the 16S rRNA. Forms part of the Shine-Dalgarno cleft in the 70S ribosome. The sequence is that of Small ribosomal subunit protein uS11 from Variovorax paradoxus (strain S110).